The following is a 165-amino-acid chain: Large ribosomal subunit protein uL15 (165 aa).

Residues 1-29 are compositionally biased toward basic residues; the sequence is MTSKKKRQRGSRTHGGGSHKNRRGAGHRG. 2 disordered regions span residues 1-59 and 133-165; these read MTSK…QKVQ and KVEG…ADEE. Positions 30–47 are enriched in basic and acidic residues; the sequence is GRGDAGRDKHEFHNHEPL. Positions 154 to 165 are enriched in acidic residues; the sequence is AEETEDADADEE.

It belongs to the universal ribosomal protein uL15 family. As to quaternary structure, part of the 50S ribosomal subunit. Interacts weakly with proteins L18e and L32e.

Functionally, binds to the 23S rRNA. In Haloarcula marismortui (strain ATCC 43049 / DSM 3752 / JCM 8966 / VKM B-1809) (Halobacterium marismortui), this protein is Large ribosomal subunit protein uL15 (rpl15).